The sequence spans 606 residues: Scavenger receptor class A member 3 (606 aa).

Over methionine 1–arginine 56 the chain is Cytoplasmic. Residues isoleucine 57–phenylalanine 77 form a helical; Signal-anchor for type II membrane protein membrane-spanning segment. Over arginine 78–tyrosine 606 the chain is Extracellular. N-linked (GlcNAc...) asparagine glycosylation is found at asparagine 115, asparagine 182, asparagine 224, asparagine 257, asparagine 313, asparagine 337, asparagine 365, asparagine 400, asparagine 430, and asparagine 451. Residues isoleucine 455–tyrosine 606 form a disordered region. Collagen-like domains lie at arginine 456 to serine 558 and glycine 559 to glycine 601. The segment covering proline 497–arginine 516 has biased composition (low complexity). Positions glycine 526–glycine 535 are enriched in gly residues. Composition is skewed to pro residues over residues proline 548 to serine 558 and proline 591 to tyrosine 606.

The protein localises to the endoplasmic reticulum membrane. Its subcellular location is the golgi apparatus membrane. In terms of biological role, seems to protect cells by scavenging oxidative molecules or harmful products of oxidation. This is Scavenger receptor class A member 3 (Scara3) from Mus musculus (Mouse).